Consider the following 195-residue polypeptide: Imidazoleglycerol-phosphate dehydratase (195 aa).

Belongs to the imidazoleglycerol-phosphate dehydratase family.

It localises to the cytoplasm. The enzyme catalyses D-erythro-1-(imidazol-4-yl)glycerol 3-phosphate = 3-(imidazol-4-yl)-2-oxopropyl phosphate + H2O. Its pathway is amino-acid biosynthesis; L-histidine biosynthesis; L-histidine from 5-phospho-alpha-D-ribose 1-diphosphate: step 6/9. This is Imidazoleglycerol-phosphate dehydratase from Bordetella avium (strain 197N).